The chain runs to 60 residues: Large ribosomal subunit protein bL32 (60 aa).

The disordered stretch occupies residues 1-60 (MAVQQNKKSRSARDMRRSHDALEASTLSVEKSTGEVHLRHHVSPEGVYRGRKVIDKGADE). Positions 11–22 (SARDMRRSHDAL) are enriched in basic and acidic residues.

This sequence belongs to the bacterial ribosomal protein bL32 family.

The chain is Large ribosomal subunit protein bL32 from Ectopseudomonas mendocina (strain ymp) (Pseudomonas mendocina).